Reading from the N-terminus, the 125-residue chain is Large ribosomal subunit protein bL12 (125 aa).

This sequence belongs to the bacterial ribosomal protein bL12 family. In terms of assembly, homodimer. Part of the ribosomal stalk of the 50S ribosomal subunit. Forms a multimeric L10(L12)X complex, where L10 forms an elongated spine to which 2 to 4 L12 dimers bind in a sequential fashion. Binds GTP-bound translation factors.

Functionally, forms part of the ribosomal stalk which helps the ribosome interact with GTP-bound translation factors. Is thus essential for accurate translation. In Azorhizobium caulinodans (strain ATCC 43989 / DSM 5975 / JCM 20966 / LMG 6465 / NBRC 14845 / NCIMB 13405 / ORS 571), this protein is Large ribosomal subunit protein bL12.